A 309-amino-acid polypeptide reads, in one-letter code: Diadenylate cyclase (309 aa).

One can recognise a DAC domain in the interval 144–301; the sequence is TITLYELFET…DGKIVFETDP (158 aa).

Belongs to the adenylate cyclase family. DacZ subfamily. It depends on Mn(2+) as a cofactor.

It carries out the reaction 2 ATP = 3',3'-c-di-AMP + 2 diphosphate. In terms of biological role, diadenylate cyclase that catalyzes the condensation of 2 ATP molecules into cyclic di-AMP (c-di-AMP). c-di-AMP is a second messenger for intracellular signal transduction involved in the control of important regulatory processes such as osmoregulation. The chain is Diadenylate cyclase from Methanocaldococcus jannaschii (strain ATCC 43067 / DSM 2661 / JAL-1 / JCM 10045 / NBRC 100440) (Methanococcus jannaschii).